The primary structure comprises 135 residues: Protein PsiE homolog (135 aa).

4 helical membrane passes run 20-40 (VGLI…TIHL), 54-74 (YMLI…ALIV), 82-102 (HFPL…LIIV), and 107-127 (PIDT…LYLA).

This sequence belongs to the PsiE family.

Its subcellular location is the cell inner membrane. This chain is Protein PsiE homolog, found in Yersinia pseudotuberculosis serotype IB (strain PB1/+).